Here is a 166-residue protein sequence, read N- to C-terminus: Small ribosomal subunit protein uS5 (166 aa).

One can recognise an S5 DRBM domain in the interval 11-74; the sequence is LIEKLVSVKR…ENAKKNMVSV (64 aa).

It belongs to the universal ribosomal protein uS5 family. Part of the 30S ribosomal subunit. Contacts proteins S4 and S8.

In terms of biological role, with S4 and S12 plays an important role in translational accuracy. Its function is as follows. Located at the back of the 30S subunit body where it stabilizes the conformation of the head with respect to the body. This is Small ribosomal subunit protein uS5 from Francisella tularensis subsp. tularensis (strain FSC 198).